Reading from the N-terminus, the 898-residue chain is Alanine--tRNA ligase (898 aa).

Positions 584, 588, 686, and 690 each coordinate Zn(2+).

Belongs to the class-II aminoacyl-tRNA synthetase family. Zn(2+) is required as a cofactor.

The protein resides in the cytoplasm. The catalysed reaction is tRNA(Ala) + L-alanine + ATP = L-alanyl-tRNA(Ala) + AMP + diphosphate. Functionally, catalyzes the attachment of alanine to tRNA(Ala) in a two-step reaction: alanine is first activated by ATP to form Ala-AMP and then transferred to the acceptor end of tRNA(Ala). Also edits incorrectly charged Ser-tRNA(Ala) and Gly-tRNA(Ala) via its editing domain. In Myxococcus xanthus (strain DK1622), this protein is Alanine--tRNA ligase.